Consider the following 486-residue polypeptide: Iron-sulfur cluster assembly SufBD family protein ycf24 (486 aa).

Belongs to the iron-sulfur cluster assembly SufBD family.

Its subcellular location is the plastid. The protein resides in the chloroplast. The chain is Iron-sulfur cluster assembly SufBD family protein ycf24 (ycf24) from Trieres chinensis (Marine centric diatom).